The primary structure comprises 461 residues: Bifunctional protein GlmU (461 aa).

The segment at 1–230 is pyrophosphorylase; sequence MSKIHAVVLA…PEETLGVNDR (230 aa). UDP-N-acetyl-alpha-D-glucosamine is bound by residues 9–12, lysine 23, glutamine 73, 78–79, 101–103, glycine 140, glutamate 155, asparagine 170, and asparagine 228; these read LAAG, GT, and YGD. Mg(2+) is bound at residue aspartate 103. Asparagine 228 is a Mg(2+) binding site. The tract at residues 231–251 is linker; that stretch reads VQLSEAEAYMKKRIMTGHMRN. The interval 252 to 461 is N-acetyltransferase; it reads GVTIIDPTST…KMPRKGKKQS (210 aa). UDP-N-acetyl-alpha-D-glucosamine-binding residues include arginine 333 and lysine 351. Histidine 363 acts as the Proton acceptor in catalysis. UDP-N-acetyl-alpha-D-glucosamine is bound by residues tyrosine 366 and asparagine 377. Acetyl-CoA-binding positions include 386 to 387, alanine 423, and arginine 440; that span reads NY.

This sequence in the N-terminal section; belongs to the N-acetylglucosamine-1-phosphate uridyltransferase family. It in the C-terminal section; belongs to the transferase hexapeptide repeat family. In terms of assembly, homotrimer. Requires Mg(2+) as cofactor.

It is found in the cytoplasm. It catalyses the reaction alpha-D-glucosamine 1-phosphate + acetyl-CoA = N-acetyl-alpha-D-glucosamine 1-phosphate + CoA + H(+). The catalysed reaction is N-acetyl-alpha-D-glucosamine 1-phosphate + UTP + H(+) = UDP-N-acetyl-alpha-D-glucosamine + diphosphate. Its pathway is nucleotide-sugar biosynthesis; UDP-N-acetyl-alpha-D-glucosamine biosynthesis; N-acetyl-alpha-D-glucosamine 1-phosphate from alpha-D-glucosamine 6-phosphate (route II): step 2/2. It participates in nucleotide-sugar biosynthesis; UDP-N-acetyl-alpha-D-glucosamine biosynthesis; UDP-N-acetyl-alpha-D-glucosamine from N-acetyl-alpha-D-glucosamine 1-phosphate: step 1/1. The protein operates within bacterial outer membrane biogenesis; LPS lipid A biosynthesis. Functionally, catalyzes the last two sequential reactions in the de novo biosynthetic pathway for UDP-N-acetylglucosamine (UDP-GlcNAc). The C-terminal domain catalyzes the transfer of acetyl group from acetyl coenzyme A to glucosamine-1-phosphate (GlcN-1-P) to produce N-acetylglucosamine-1-phosphate (GlcNAc-1-P), which is converted into UDP-GlcNAc by the transfer of uridine 5-monophosphate (from uridine 5-triphosphate), a reaction catalyzed by the N-terminal domain. This chain is Bifunctional protein GlmU, found in Brevibacillus brevis (strain 47 / JCM 6285 / NBRC 100599).